Consider the following 116-residue polypeptide: NADH-ubiquinone oxidoreductase chain 3 (116 aa).

3 helical membrane passes run Leu-3–Phe-23, Phe-56–Leu-76, and Gly-87–Trp-107.

This sequence belongs to the complex I subunit 3 family.

The protein resides in the mitochondrion membrane. It carries out the reaction a ubiquinone + NADH + 5 H(+)(in) = a ubiquinol + NAD(+) + 4 H(+)(out). Functionally, core subunit of the mitochondrial membrane respiratory chain NADH dehydrogenase (Complex I) that is believed to belong to the minimal assembly required for catalysis. Complex I functions in the transfer of electrons from NADH to the respiratory chain. The immediate electron acceptor for the enzyme is believed to be ubiquinone. In Cyprinus carpio (Common carp), this protein is NADH-ubiquinone oxidoreductase chain 3 (MT-ND3).